The chain runs to 198 residues: Ribonuclease HII (198 aa).

Residues 2–192 enclose the RNase H type-2 domain; that stretch reads MYYCGIDEAG…IKKIIDNQKN (191 aa). A divalent metal cation contacts are provided by aspartate 8, glutamate 9, and aspartate 101.

It belongs to the RNase HII family. Requires Mn(2+) as cofactor. It depends on Mg(2+) as a cofactor.

It localises to the cytoplasm. It catalyses the reaction Endonucleolytic cleavage to 5'-phosphomonoester.. Its function is as follows. Endonuclease that specifically degrades the RNA of RNA-DNA hybrids. The polypeptide is Ribonuclease HII (Natranaerobius thermophilus (strain ATCC BAA-1301 / DSM 18059 / JW/NM-WN-LF)).